The sequence spans 436 residues: Na(+)/H(+) antiporter NhaA (436 aa).

A run of 11 helical transmembrane segments spans residues 31–51 (VGGA…NSPG), 74–94 (LSLG…IAGL), 112–132 (IVPI…YTLI), 143–163 (GWAI…AVIS), 173–193 (FLLT…AVFY), 196–216 (NLQP…TWAV), 222–242 (SWYL…ESGV), 285–305 (VAVP…WAGF), 315–335 (IGII…ATFL), 350–370 (WIDV…SLLI), and 384–404 (HAKV…TVIL).

This sequence belongs to the NhaA Na(+)/H(+) (TC 2.A.33) antiporter family.

It is found in the cell membrane. It carries out the reaction Na(+)(in) + 2 H(+)(out) = Na(+)(out) + 2 H(+)(in). Na(+)/H(+) antiporter that extrudes sodium in exchange for external protons. This chain is Na(+)/H(+) antiporter NhaA, found in Renibacterium salmoninarum (strain ATCC 33209 / DSM 20767 / JCM 11484 / NBRC 15589 / NCIMB 2235).